A 79-amino-acid chain; its full sequence is Large ribosomal subunit protein uL29 (79 aa).

Belongs to the universal ribosomal protein uL29 family.

The protein is Large ribosomal subunit protein uL29 of Nocardia farcinica (strain IFM 10152).